The chain runs to 345 residues: Solute carrier family 25 member 43 (345 aa).

Solcar repeat units lie at residues 11–100 (TSSQ…IDEL), 104–195 (SQWR…QERH), and 199–297 (TSLQ…LYRN). Helical transmembrane passes span 16–36 (LMCV…LEVV), 67–87 (FWKG…IHLA), 109–129 (IVAG…LEVV), 165–185 (GFSL…AVYI), 204–224 (FING…FETV), and 261–281 (VMAL…YFGL).

Belongs to the mitochondrial carrier (TC 2.A.29) family.

The protein resides in the mitochondrion inner membrane. This Danio rerio (Zebrafish) protein is Solute carrier family 25 member 43 (slc25a43).